The following is a 360-amino-acid chain: Phosphoserine aminotransferase (360 aa).

Arginine 41 contributes to the L-glutamate binding site. Pyridoxal 5'-phosphate contacts are provided by residues 75–76 (AS), tryptophan 101, threonine 151, aspartate 171, and glutamine 194. At lysine 195 the chain carries N6-(pyridoxal phosphate)lysine. 236-237 (NT) serves as a coordination point for pyridoxal 5'-phosphate.

It belongs to the class-V pyridoxal-phosphate-dependent aminotransferase family. SerC subfamily. As to quaternary structure, homodimer. Requires pyridoxal 5'-phosphate as cofactor.

The protein resides in the cytoplasm. It carries out the reaction O-phospho-L-serine + 2-oxoglutarate = 3-phosphooxypyruvate + L-glutamate. It catalyses the reaction 4-(phosphooxy)-L-threonine + 2-oxoglutarate = (R)-3-hydroxy-2-oxo-4-phosphooxybutanoate + L-glutamate. It functions in the pathway amino-acid biosynthesis; L-serine biosynthesis; L-serine from 3-phospho-D-glycerate: step 2/3. It participates in cofactor biosynthesis; pyridoxine 5'-phosphate biosynthesis; pyridoxine 5'-phosphate from D-erythrose 4-phosphate: step 3/5. Functionally, catalyzes the reversible conversion of 3-phosphohydroxypyruvate to phosphoserine and of 3-hydroxy-2-oxo-4-phosphonooxybutanoate to phosphohydroxythreonine. In Herpetosiphon aurantiacus (strain ATCC 23779 / DSM 785 / 114-95), this protein is Phosphoserine aminotransferase.